Here is an 84-residue protein sequence, read N- to C-terminus: Three-finger toxin MALT0070C (84 aa).

Residues 1–21 (MKTLLLTLVVVTIVCLDLGYT) form the signal peptide. 4 cysteine pairs are disulfide-bonded: Cys-24–Cys-43, Cys-36–Cys-60, Cys-64–Cys-71, and Cys-72–Cys-77.

It belongs to the three-finger toxin family. Short-chain subfamily. In terms of tissue distribution, expressed by the venom gland.

The protein localises to the secreted. This is Three-finger toxin MALT0070C from Micrurus altirostris (Uruguayan coral snake).